A 2261-amino-acid chain; its full sequence is Phospholipid-transporting ATPase ABCA1 (2261 aa).

Residue Cys3 is the site of S-palmitoyl cysteine attachment. Asn14 carries N-linked (GlcNAc...) asparagine glycosylation. Residues 22–42 (TCQLLLEVAWPLFIFLILISV) form a helical membrane-spanning segment. Cys23 carries S-palmitoyl cysteine lipidation. Residues 43 to 639 (RLSYPPYEQH…DIFLRVMSRS (597 aa)) are Extracellular-facing. Positions 69–80 (WVQGIICNANNP) are annulus domain 1. Cys75 and Cys309 form a disulfide bridge. N-linked (GlcNAc...) asparagine glycans are attached at residues Asn98, Asn151, Asn161, Asn196, Asn244, Asn292, Asn337, and Asn349. The tract at residues 368–379 (SRIIWKALKPLL) is annulus domain 2. N-linked (GlcNAc...) asparagine glycosylation is found at Asn400, Asn478, Asn489, and Asn521. Residues 564-594 (ERTNKIKDGYWDPGPRADPFEDMRYVWGGFA) form a gateway domain region. Helical transmembrane passes span 640–660 (MPLF…KGIV), 683–703 (FSWF…LVVI), 716–736 (SVVF…CFLI), 745–765 (LAAA…VLCV), and 777–797 (IFAS…FALF). Residue Asn820 is glycosylated (N-linked (GlcNAc...) asparagine). A helical transmembrane segment spans residues 827-847 (MMLFDTFLYGVMTWYIEAVFP). The ABC transporter 1 domain occupies 899-1131 (VSIQNLVKVY…LGTGYYLTLV (233 aa)). An ATP-binding site is contributed by 933–940 (GHNGAGKT). The helical transmembrane segment at 1041–1057 (LSVALAFVGGSKVVILD) threads the bilayer. Ser1042 carries the post-translational modification Phosphoserine; by PKA. 2 S-palmitoyl cysteine lipidation sites follow: Cys1110 and Cys1111. Asn1144 and Asn1294 each carry an N-linked (GlcNAc...) asparagine glycan. Positions 1283 to 1312 (RPFTEDDAADPNDSDIDPESRETDLLSGMD) are disordered. Residues 1287–1299 (EDDAADPNDSDID) show a composition bias toward acidic residues. A Phosphoserine modification is found at Ser1296. A helical transmembrane segment spans residues 1351-1371 (IVLPAVFVCIALVFSLIVPPF). Residues 1372–1656 (GKYPSLELQP…ALMTTSVDVL (285 aa)) are Extracellular-facing. Asn1453 carries an N-linked (GlcNAc...) asparagine glycan. A disulfide bridge connects residues Cys1463 and Cys1477. 2 N-linked (GlcNAc...) asparagine glycosylation sites follow: Asn1504 and Asn1637. Helical transmembrane passes span 1657–1677 (VSIC…VFLI), 1703–1723 (FVWD…IFIC), 1735–1755 (LPVL…LMYP), 1768–1788 (VVLT…TFVL), 1802–1822 (ILKS…LIDM), and 1852–1872 (NLFA…LIQY). The 233-residue stretch at 1912-2144 (LEIKELTKIY…FGDGYTIVVR (233 aa)) folds into the ABC transporter 2 domain. ATP is bound at residue 1946 to 1953 (GVNGAGKS). Residue Asn2044 is glycosylated (N-linked (GlcNAc...) asparagine). Ser2054 carries the phosphoserine; by PKA modification. An N-linked (GlcNAc...) asparagine glycan is attached at Asn2238.

This sequence belongs to the ABC transporter superfamily. ABCA family. In terms of assembly, interacts with MEGF10. May interact with APOE1; functionally associated with APOE1 in the biogenesis of HDLs. Interacts with ABCA8; this interaction potentiates cholesterol efflux. Interacts with ABCA12 and NR1H2; this interaction is required for ABCA1 localization to the cell surface and is necessary for its normal activity and stability. In terms of processing, phosphorylation on Ser-2054 regulates phospholipid efflux. Palmitoylated by ZDHHC8. Palmitoylation is essential for localization to the plasma membrane. Widely expressed, but most abundant in macrophages.

The protein resides in the cell membrane. It is found in the endosome. The catalysed reaction is ATP + H2O + phospholipidSide 1 = ADP + phosphate + phospholipidSide 2.. The enzyme catalyses a 1,2-diacyl-sn-glycero-3-phosphocholine(out) + ATP + H2O = a 1,2-diacyl-sn-glycero-3-phosphocholine(in) + ADP + phosphate + H(+). It catalyses the reaction a 1,2-diacyl-sn-glycero-3-phospho-L-serine(out) + ATP + H2O = a 1,2-diacyl-sn-glycero-3-phospho-L-serine(in) + ADP + phosphate + H(+). It carries out the reaction a sphingomyelin(in) + ATP + H2O = a sphingomyelin(out) + ADP + phosphate + H(+). The catalysed reaction is cholesterol(in) + ATP + H2O = cholesterol(out) + ADP + phosphate + H(+). Its activity is regulated as follows. ATPase activity is decreased by cholesterol and ceramide. ATPase activity is stimulated by phosphatidylcholine and to a lesser degree by phosphatidylserine and sphingomyelin. Phospholipid translocase activity is highly reduced by berylium fluoride and aluminum flouride and reduced by N-ethylmaleimide. Functionally, catalyzes the translocation of specific phospholipids from the cytoplasmic to the extracellular/lumenal leaflet of membrane coupled to the hydrolysis of ATP. Thereby, participates in phospholipid transfer to apolipoproteins to form nascent high density lipoproteins/HDLs. Transports preferentially phosphatidylcholine over phosphatidylserine. May play a similar role in the efflux of intracellular cholesterol to apolipoproteins and the formation of nascent high density lipoproteins/HDLs. Translocates phospholipids from the outer face of the plasma membrane and forces it through its gateway and annulus into an elongated hydrophobic tunnel in its extracellular domain. In Homo sapiens (Human), this protein is Phospholipid-transporting ATPase ABCA1.